We begin with the raw amino-acid sequence, 31 residues long: Protein YmiC (31 aa).

A helical transmembrane segment spans residues W9–I29.

The protein resides in the cell inner membrane. This Escherichia coli (strain K12) protein is Protein YmiC.